The following is a 630-amino-acid chain: tRNA uridine 5-carboxymethylaminomethyl modification enzyme MnmG (630 aa).

13–18 contributes to the FAD binding site; that stretch reads GGGHAG. 273–287 serves as a coordination point for NAD(+); that stretch reads GPRYCPSIEDKIHRF.

Belongs to the MnmG family. Homodimer. Heterotetramer of two MnmE and two MnmG subunits. It depends on FAD as a cofactor.

It localises to the cytoplasm. Its function is as follows. NAD-binding protein involved in the addition of a carboxymethylaminomethyl (cmnm) group at the wobble position (U34) of certain tRNAs, forming tRNA-cmnm(5)s(2)U34. This Pseudomonas putida (Arthrobacter siderocapsulatus) protein is tRNA uridine 5-carboxymethylaminomethyl modification enzyme MnmG.